We begin with the raw amino-acid sequence, 238 residues long: MKVNKFITIYKDIAQQIEGGRWKAEEILPSEHELTAQYGTSRETVRKALHMLAQNGYIQKIRGKGSVVLNREKMQFPVSGLVSFKELAQTLGKETKTTVHKFGLEPPSELIQKQLRANLDDDIWEVIRSRKIDGEHVILDKDYFFRKHVPHLTKEICENSIYEYIEGELGLSISYAQKEIVAEPCTDEDRELLDLRGYDHMVVVRNYVFLEDTSLFQYTESRHRLDKFRFVDFARRGK.

The 71-residue stretch at 1-71 (MKVNKFITIY…RGKGSVVLNR (71 aa)) folds into the HTH gntR-type domain. Positions 31–50 (EHELTAQYGTSRETVRKALH) form a DNA-binding region, H-T-H motif.

Dimer of dimers.

In terms of biological role, repressor for the trePA operon. It is able to bind trehalose-6-phosphate. This chain is HTH-type transcriptional regulator TreR (treR), found in Bacillus subtilis (strain 168).